A 184-amino-acid chain; its full sequence is Large ribosomal subunit protein uL5c (184 aa).

The protein belongs to the universal ribosomal protein uL5 family. Part of the 50S ribosomal subunit; contacts the 5S rRNA.

It localises to the plastid. Its subcellular location is the chloroplast. Its function is as follows. Binds 5S rRNA, forms part of the central protuberance of the 50S subunit. This Mesostigma viride (Green alga) protein is Large ribosomal subunit protein uL5c (rpl5).